The following is a 315-amino-acid chain: DNA-directed RNA polymerase subunit alpha (315 aa).

The alpha N-terminal domain (alpha-NTD) stretch occupies residues 1 to 228 (MLEIEKPKIE…EHLRLFVGLT (228 aa)). Residues 245 to 315 (KNKLLEMPIE…LGLDLRHDEE (71 aa)) form an alpha C-terminal domain (alpha-CTD) region.

The protein belongs to the RNA polymerase alpha chain family. Homodimer. The RNAP catalytic core consists of 2 alpha, 1 beta, 1 beta' and 1 omega subunit. When a sigma factor is associated with the core the holoenzyme is formed, which can initiate transcription.

It catalyses the reaction RNA(n) + a ribonucleoside 5'-triphosphate = RNA(n+1) + diphosphate. In terms of biological role, DNA-dependent RNA polymerase catalyzes the transcription of DNA into RNA using the four ribonucleoside triphosphates as substrates. This is DNA-directed RNA polymerase subunit alpha from Desulforudis audaxviator (strain MP104C).